Consider the following 484-residue polypeptide: tRNA sulfurtransferase (484 aa).

The 105-residue stretch at threonine 61–arginine 165 folds into the THUMP domain. Residues leucine 183–isoleucine 184, lysine 265, glycine 287, and glutamine 296 each bind ATP. Cysteine 344 and cysteine 456 are disulfide-bonded. Residues leucine 404 to serine 484 enclose the Rhodanese domain. The active-site Cysteine persulfide intermediate is the cysteine 456.

It belongs to the ThiI family.

Its subcellular location is the cytoplasm. It catalyses the reaction [ThiI sulfur-carrier protein]-S-sulfanyl-L-cysteine + a uridine in tRNA + 2 reduced [2Fe-2S]-[ferredoxin] + ATP + H(+) = [ThiI sulfur-carrier protein]-L-cysteine + a 4-thiouridine in tRNA + 2 oxidized [2Fe-2S]-[ferredoxin] + AMP + diphosphate. It carries out the reaction [ThiS sulfur-carrier protein]-C-terminal Gly-Gly-AMP + S-sulfanyl-L-cysteinyl-[cysteine desulfurase] + AH2 = [ThiS sulfur-carrier protein]-C-terminal-Gly-aminoethanethioate + L-cysteinyl-[cysteine desulfurase] + A + AMP + 2 H(+). Its pathway is cofactor biosynthesis; thiamine diphosphate biosynthesis. Functionally, catalyzes the ATP-dependent transfer of a sulfur to tRNA to produce 4-thiouridine in position 8 of tRNAs, which functions as a near-UV photosensor. Also catalyzes the transfer of sulfur to the sulfur carrier protein ThiS, forming ThiS-thiocarboxylate. This is a step in the synthesis of thiazole, in the thiamine biosynthesis pathway. The sulfur is donated as persulfide by IscS. The sequence is that of tRNA sulfurtransferase from Histophilus somni (strain 2336) (Haemophilus somnus).